A 318-amino-acid polypeptide reads, in one-letter code: tRNA U34 carboxymethyltransferase (318 aa).

Residues lysine 85, tryptophan 99, lysine 104, glycine 124, 175 to 176 (LD), methionine 190, tyrosine 194, and arginine 311 each bind carboxy-S-adenosyl-L-methionine.

The protein belongs to the class I-like SAM-binding methyltransferase superfamily. CmoB family. In terms of assembly, homotetramer.

It carries out the reaction carboxy-S-adenosyl-L-methionine + 5-hydroxyuridine(34) in tRNA = 5-carboxymethoxyuridine(34) in tRNA + S-adenosyl-L-homocysteine + H(+). In terms of biological role, catalyzes carboxymethyl transfer from carboxy-S-adenosyl-L-methionine (Cx-SAM) to 5-hydroxyuridine (ho5U) to form 5-carboxymethoxyuridine (cmo5U) at position 34 in tRNAs. The polypeptide is tRNA U34 carboxymethyltransferase (Ruthia magnifica subsp. Calyptogena magnifica).